The following is a 1859-amino-acid chain: Retinitis pigmentosa 1-like 1 protein (1859 aa).

Disordered stretches follow at residues 1–22 (MNSTPGDTRDAPAPSHPAPSHR) and 115–154 (RKPPKTSREPGRLQRKSPSAGQAQVFQGGHEAPETSYSWK). The region spanning 42 to 126 (KKITFLKRGD…PPKTSREPGR (85 aa)) is the Doublecortin 1 domain. Basic and acidic residues predominate over residues 115–126 (RKPPKTSREPGR). Polar residues predominate over residues 130-139 (KSPSAGQAQV). Residues 160–239 (RRLTLVKNGD…NEAFRCLEME (80 aa)) form the Doublecortin 2 domain. Disordered stretches follow at residues 263 to 301 (PNAKQSVIHSRGRSGGKLRQVSLTSERSGLSDHPASGHR), 426 to 445 (IWRNPLATPEGTGPTPRRRW), 457 to 593 (WRQE…TQSH), 700 to 750 (MPQE…TSKA), 868 to 920 (CFGR…TPSA), 952 to 997 (NTEV…GVLS), 1152 to 1211 (TEDF…YPEL), 1227 to 1255 (ATGGEETGKGGRKQTWGNAPEQSVHSTML), 1298 to 1350 (GSQD…RVRE), and 1567 to 1859 (LQSK…DLDF). The segment covering 457–472 (WRQEANHRKGHDKDNL) has biased composition (basic and acidic residues). 2 stretches are compositionally biased toward polar residues: residues 499–512 (GSDTLHPVSSASSH) and 535–551 (PETQSTERALSDTSVSA). The segment covering 716–728 (SPSNSPSAGNQAS) has biased composition (low complexity). Over residues 734–750 (PFSSSLDLQEPQATSKA) the composition is skewed to polar residues. Residues 870–883 (GRESASNGSTSSGH) show a composition bias toward low complexity. Polar residues-rich tracts occupy residues 1241–1252 (TWGNAPEQSVHS), 1336–1345 (ESPQHFSESN), and 1567–1577 (LQSKKGGSSNR). Residues 1616 to 1632 (GEGKQRLRAEEDPEILK) are compositionally biased toward basic and acidic residues. Acidic residues predominate over residues 1641 to 1652 (PEEDEATEEDGE). Residues 1700–1720 (EASRERQQEVEGRHQDVKEDS) are compositionally biased toward basic and acidic residues. Residues 1756 to 1778 (SHHTACSSRALSLDNSSQVSQKG) are compositionally biased toward polar residues.

In terms of assembly, interacts with RP1; has a synergistic effect with RP1 in photoreceptor differentiation. In terms of tissue distribution, retinal-specific; expressed in photoreceptor.

It is found in the cytoplasm. The protein resides in the cytoskeleton. Its subcellular location is the cilium axoneme. The protein localises to the cell projection. It localises to the cilium. It is found in the photoreceptor outer segment. Required for the differentiation of photoreceptor cells. Plays a role in the organization of outer segment of rod and cone photoreceptors. The chain is Retinitis pigmentosa 1-like 1 protein (Rp1l1) from Mus musculus (Mouse).